The primary structure comprises 151 residues: Ribosome maturation factor RimP (151 aa).

The protein belongs to the RimP family.

It is found in the cytoplasm. Required for maturation of 30S ribosomal subunits. This is Ribosome maturation factor RimP from Vibrio vulnificus (strain CMCP6).